Reading from the N-terminus, the 373-residue chain is Pollen allergen KBG 31 (373 aa).

The signal sequence occupies residues 1–28 (MDKANGAYKTALKAASAVAPAEKFPVFQ).

The protein belongs to the Poa p IX/Phl p VI allergen family. As to expression, pollen.

This chain is Pollen allergen KBG 31, found in Poa pratensis (Kentucky bluegrass).